Consider the following 60-residue polypeptide: Large ribosomal subunit protein bL32 (60 aa).

The interval 1–60 is disordered; it reads MAVQQNKKSPSKRGMHRSHDFLVNPSTAIEPTTGETHLRHHISPNGFYRGRKVLKTKADE. Residues 24–35 are compositionally biased toward polar residues; sequence NPSTAIEPTTGE. Over residues 49 to 60 the composition is skewed to basic residues; it reads RGRKVLKTKADE.

Belongs to the bacterial ribosomal protein bL32 family.

The polypeptide is Large ribosomal subunit protein bL32 (Bordetella petrii (strain ATCC BAA-461 / DSM 12804 / CCUG 43448)).